Consider the following 474-residue polypeptide: Glutamate--tRNA ligase (474 aa).

Positions 18–28 (PSPTGFLHIGG) match the 'HIGH' region motif. The short motif at 244–248 (KLSKR) is the 'KMSKS' region element. K247 contacts ATP.

This sequence belongs to the class-I aminoacyl-tRNA synthetase family. Glutamate--tRNA ligase type 1 subfamily. In terms of assembly, monomer.

It is found in the cytoplasm. The enzyme catalyses tRNA(Glu) + L-glutamate + ATP = L-glutamyl-tRNA(Glu) + AMP + diphosphate. Functionally, catalyzes the attachment of glutamate to tRNA(Glu) in a two-step reaction: glutamate is first activated by ATP to form Glu-AMP and then transferred to the acceptor end of tRNA(Glu). The chain is Glutamate--tRNA ligase from Caulobacter sp. (strain K31).